The primary structure comprises 261 residues: Trifolitoxin immunity protein (261 aa).

Functionally, required for TFX resistance. In Rhizobium leguminosarum bv. trifolii, this protein is Trifolitoxin immunity protein (tfxG).